A 115-amino-acid chain; its full sequence is Large ribosomal subunit protein bL19 (115 aa).

Belongs to the bacterial ribosomal protein bL19 family.

This protein is located at the 30S-50S ribosomal subunit interface and may play a role in the structure and function of the aminoacyl-tRNA binding site. The protein is Large ribosomal subunit protein bL19 of Bacillus pumilus (strain SAFR-032).